We begin with the raw amino-acid sequence, 441 residues long: Ribulose bisphosphate carboxylase large chain (441 aa).

K5 bears the N6,N6,N6-trimethyllysine mark. Substrate-binding residues include N114 and T164. The active-site Proton acceptor is the K166. A substrate-binding site is contributed by K168. Residues K192, D194, and E195 each coordinate Mg(2+). K192 is subject to N6-carboxylysine. Catalysis depends on H285, which acts as the Proton acceptor. Residues R286, H318, and S370 each coordinate substrate.

It belongs to the RuBisCO large chain family. Type I subfamily. As to quaternary structure, heterohexadecamer of 8 large chains and 8 small chains; disulfide-linked. The disulfide link is formed within the large subunit homodimers. It depends on Mg(2+) as a cofactor. In terms of processing, the disulfide bond which can form in the large chain dimeric partners within the hexadecamer appears to be associated with oxidative stress and protein turnover.

Its subcellular location is the plastid. It is found in the chloroplast. The enzyme catalyses 2 (2R)-3-phosphoglycerate + 2 H(+) = D-ribulose 1,5-bisphosphate + CO2 + H2O. It catalyses the reaction D-ribulose 1,5-bisphosphate + O2 = 2-phosphoglycolate + (2R)-3-phosphoglycerate + 2 H(+). RuBisCO catalyzes two reactions: the carboxylation of D-ribulose 1,5-bisphosphate, the primary event in carbon dioxide fixation, as well as the oxidative fragmentation of the pentose substrate in the photorespiration process. Both reactions occur simultaneously and in competition at the same active site. The polypeptide is Ribulose bisphosphate carboxylase large chain (Glycyrrhiza echinata (Licorice)).